Here is a 1376-residue protein sequence, read N- to C-terminus: DNA-directed RNA polymerase subunit beta (1376 aa).

Belongs to the RNA polymerase beta chain family. As to quaternary structure, the RNAP catalytic core consists of 2 alpha, 1 beta, 1 beta' and 1 omega subunit. When a sigma factor is associated with the core the holoenzyme is formed, which can initiate transcription.

The enzyme catalyses RNA(n) + a ribonucleoside 5'-triphosphate = RNA(n+1) + diphosphate. In terms of biological role, DNA-dependent RNA polymerase catalyzes the transcription of DNA into RNA using the four ribonucleoside triphosphates as substrates. The protein is DNA-directed RNA polymerase subunit beta of Methylorubrum extorquens (strain PA1) (Methylobacterium extorquens).